Consider the following 155-residue polypeptide: Protein-export protein SecB (155 aa).

This sequence belongs to the SecB family. In terms of assembly, homotetramer, a dimer of dimers. One homotetramer interacts with 1 SecA dimer.

It is found in the cytoplasm. In terms of biological role, one of the proteins required for the normal export of preproteins out of the cell cytoplasm. It is a molecular chaperone that binds to a subset of precursor proteins, maintaining them in a translocation-competent state. It also specifically binds to its receptor SecA. The chain is Protein-export protein SecB from Enterobacter sp. (strain 638).